A 352-amino-acid polypeptide reads, in one-letter code: UDP-3-O-acylglucosamine N-acyltransferase (352 aa).

His-244 functions as the Proton acceptor in the catalytic mechanism.

This sequence belongs to the transferase hexapeptide repeat family. LpxD subfamily. Homotrimer.

The catalysed reaction is a UDP-3-O-[(3R)-3-hydroxyacyl]-alpha-D-glucosamine + a (3R)-hydroxyacyl-[ACP] = a UDP-2-N,3-O-bis[(3R)-3-hydroxyacyl]-alpha-D-glucosamine + holo-[ACP] + H(+). The protein operates within bacterial outer membrane biogenesis; LPS lipid A biosynthesis. Its function is as follows. Catalyzes the N-acylation of UDP-3-O-acylglucosamine using 3-hydroxyacyl-ACP as the acyl donor. Is involved in the biosynthesis of lipid A, a phosphorylated glycolipid that anchors the lipopolysaccharide to the outer membrane of the cell. The polypeptide is UDP-3-O-acylglucosamine N-acyltransferase (Anaeromyxobacter sp. (strain Fw109-5)).